The following is a 176-amino-acid chain: Urease accessory protein UreE (176 aa).

It belongs to the UreE family.

The protein localises to the cytoplasm. In terms of biological role, involved in urease metallocenter assembly. Binds nickel. Probably functions as a nickel donor during metallocenter assembly. The chain is Urease accessory protein UreE from Helicobacter bizzozeronii.